We begin with the raw amino-acid sequence, 53 residues long: MGVKSALFIMAVFAAANVQYVLAACAETGAVCVHSDECCSGACSPVFNYCLPQ.

A signal peptide spans 1 to 18; sequence MGVKSALFIMAVFAAANV. Disulfide bonds link Cys25/Cys39, Cys32/Cys43, and Cys38/Cys50.

Its subcellular location is the secreted. This Orgyia pseudotsugata multicapsid polyhedrosis virus (OpMNPV) protein is Conotoxin-like peptide 1 (CTL-1).